Consider the following 481-residue polypeptide: Proline--tRNA ligase (481 aa).

Belongs to the class-II aminoacyl-tRNA synthetase family. ProS type 3 subfamily. As to quaternary structure, homodimer.

It localises to the cytoplasm. The enzyme catalyses tRNA(Pro) + L-proline + ATP = L-prolyl-tRNA(Pro) + AMP + diphosphate. In terms of biological role, catalyzes the attachment of proline to tRNA(Pro) in a two-step reaction: proline is first activated by ATP to form Pro-AMP and then transferred to the acceptor end of tRNA(Pro). This is Proline--tRNA ligase from Pelodictyon phaeoclathratiforme (strain DSM 5477 / BU-1).